Consider the following 101-residue polypeptide: Small ribosomal subunit protein bS16 (101 aa).

The protein belongs to the bacterial ribosomal protein bS16 family.

The chain is Small ribosomal subunit protein bS16 from Ureaplasma parvum serovar 3 (strain ATCC 700970).